The following is a 42-amino-acid chain: Photosystem I reaction center subunit IX (42 aa).

The helical transmembrane segment at 7–27 threads the bilayer; that stretch reads YLSTAPVLATLWFGFLAGLLI.

Belongs to the PsaJ family.

The protein resides in the plastid. Its subcellular location is the chloroplast thylakoid membrane. May help in the organization of the PsaE and PsaF subunits. The chain is Photosystem I reaction center subunit IX from Psilotum nudum (Whisk fern).